The sequence spans 594 residues: Glutamate decarboxylase 1 (594 aa).

Low complexity predominate over residues 1-13; it reads MASSTPSSSATSS. The disordered stretch occupies residues 1–23; the sequence is MASSTPSSSATSSNAGADPNTTN. A Phosphoserine modification is found at S78. Residue 190 to 192 coordinates 4-aminobutanoate; sequence QLS. The residue at position 405 (K405) is an N6-(pyridoxal phosphate)lysine. Residue R567 coordinates 4-aminobutanoate.

Belongs to the group II decarboxylase family. Homodimer. Pyridoxal 5'-phosphate is required as a cofactor.

It carries out the reaction L-glutamate + H(+) = 4-aminobutanoate + CO2. Functionally, catalyzes the synthesis of the inhibitory neurotransmitter gamma-aminobutyric acid (GABA) with pyridoxal 5'-phosphate as cofactor. The chain is Glutamate decarboxylase 1 (GAD1) from Felis catus (Cat).